The primary structure comprises 319 residues: HPr kinase/phosphorylase (319 aa).

Active-site residues include His-144 and Lys-165. ATP is bound at residue 159 to 166; it reads GKSGIGKS. Ser-166 serves as a coordination point for Mg(2+). Catalysis depends on Asp-183, which acts as the Proton acceptor; for phosphorylation activity. Proton donor; for dephosphorylation activity. The tract at residues 207 to 216 is important for the catalytic mechanism of both phosphorylation and dephosphorylation; the sequence is MEIRGLGVIN. Glu-208 contributes to the Mg(2+) binding site. Arg-249 is an active-site residue. Residues 270–275 form an important for the catalytic mechanism of dephosphorylation region; the sequence is PVRPGR.

The protein belongs to the HPrK/P family. In terms of assembly, homohexamer. Mg(2+) is required as a cofactor.

The catalysed reaction is [HPr protein]-L-serine + ATP = [HPr protein]-O-phospho-L-serine + ADP + H(+). It carries out the reaction [HPr protein]-O-phospho-L-serine + phosphate + H(+) = [HPr protein]-L-serine + diphosphate. Functionally, catalyzes the ATP- as well as the pyrophosphate-dependent phosphorylation of a specific serine residue in HPr, a phosphocarrier protein of the phosphoenolpyruvate-dependent sugar phosphotransferase system (PTS). HprK/P also catalyzes the pyrophosphate-producing, inorganic phosphate-dependent dephosphorylation (phosphorolysis) of seryl-phosphorylated HPr (P-Ser-HPr). The chain is HPr kinase/phosphorylase from Geobacter sulfurreducens (strain ATCC 51573 / DSM 12127 / PCA).